The sequence spans 101 residues: Protein S100-A7 (101 aa).

Position 2 is an N-acetylserine (S2). 2 EF-hand domains span residues 13–48 (MIDM…SACD) and 50–85 (KGTN…IATD). Residues H18 and D25 each contribute to the Zn(2+) site. A disulfide bridge connects residues C47 and C96. The Ca(2+) site is built by D63, N65, D67, K69, and E74. Zn(2+) is bound by residues H87 and H91.

As to quaternary structure, interacts with RANBP9. As to expression, fetal ear, skin, and tongue and human cell lines. Highly up-regulated in psoriatic epidermis. Also highly expressed in the urine of bladder squamous cell carcinoma (SCC) bearing patients.

It localises to the cytoplasm. The protein resides in the secreted. This chain is Protein S100-A7 (S100A7), found in Homo sapiens (Human).